Reading from the N-terminus, the 238-residue chain is MRPAGRSANQVRPVTLTRNYTKHAEGSVLVEFGDTKVLCTASIEEGVPRFLKGQGQGWITAEYGMLPRATHTRNAREAAKGKQGGRTMEIQRLIARALRAAVDLKTLGEFTITLDCDVIQADGGTRTASITGACVALADALNKLVANGKLKTNPMKGMVAAVSVGIVNGEAICDLEYVEDSAAETDMNVVMTEDGRIIEVQGTAEGEPFSHEELLTLLALARGGIESIVATQKAALEN.

Phosphate contacts are provided by residues R86 and 124-126; that span reads GTR.

This sequence belongs to the RNase PH family. In terms of assembly, homohexameric ring arranged as a trimer of dimers.

The enzyme catalyses tRNA(n+1) + phosphate = tRNA(n) + a ribonucleoside 5'-diphosphate. Its function is as follows. Phosphorolytic 3'-5' exoribonuclease that plays an important role in tRNA 3'-end maturation. Removes nucleotide residues following the 3'-CCA terminus of tRNAs; can also add nucleotides to the ends of RNA molecules by using nucleoside diphosphates as substrates, but this may not be physiologically important. Probably plays a role in initiation of 16S rRNA degradation (leading to ribosome degradation) during starvation. The polypeptide is Ribonuclease PH (Salmonella agona (strain SL483)).